An 85-amino-acid polypeptide reads, in one-letter code: MKSEKSADAYGTYFLLISTIFLLFIARQASSYQMLICLDLNISCADCQKQCDETSYGGMCLNGGRTCCCKKSPPPSYYDPRPPSS.

A signal peptide spans 1–31 (MKSEKSADAYGTYFLLISTIFLLFIARQASS). Cystine bridges form between C37-C69, C44-C60, C47-C67, and C51-C68.

The protein belongs to the DEFL family.

It is found in the secreted. The polypeptide is Putative defensin-like protein 79 (Arabidopsis thaliana (Mouse-ear cress)).